The sequence spans 524 residues: CTP synthase (524 aa).

An amidoligase domain region spans residues 1–263 (MKKYVIVTGG…HEKIASKLNV (263 aa)). A CTP-binding site is contributed by Ser13. Position 13 (Ser13) interacts with UTP. ATP contacts are provided by residues 14 to 19 (GIGKGI) and Asp71. Positions 71 and 137 each coordinate Mg(2+). CTP contacts are provided by residues 144–146 (DIE), 184–189 (KTKPTQ), and Lys220. UTP contacts are provided by residues 184-189 (KTKPTQ) and Lys220. In terms of domain architecture, Glutamine amidotransferase type-1 spans 282-524 (RIALVGKYLG…YLRKVLEGSQ (243 aa)). Gly342 provides a ligand contact to L-glutamine. The Nucleophile; for glutamine hydrolysis role is filled by Cys369. L-glutamine contacts are provided by residues 370–373 (LGMQ), Glu393, and Arg451. Active-site residues include His499 and Glu501.

It belongs to the CTP synthase family. In terms of assembly, homotetramer.

The catalysed reaction is UTP + L-glutamine + ATP + H2O = CTP + L-glutamate + ADP + phosphate + 2 H(+). It catalyses the reaction L-glutamine + H2O = L-glutamate + NH4(+). The enzyme catalyses UTP + NH4(+) + ATP = CTP + ADP + phosphate + 2 H(+). It functions in the pathway pyrimidine metabolism; CTP biosynthesis via de novo pathway; CTP from UDP: step 2/2. With respect to regulation, allosterically activated by GTP, when glutamine is the substrate; GTP has no effect on the reaction when ammonia is the substrate. The allosteric effector GTP functions by stabilizing the protein conformation that binds the tetrahedral intermediate(s) formed during glutamine hydrolysis. Inhibited by the product CTP, via allosteric rather than competitive inhibition. Catalyzes the ATP-dependent amination of UTP to CTP with either L-glutamine or ammonia as the source of nitrogen. Regulates intracellular CTP levels through interactions with the four ribonucleotide triphosphates. This chain is CTP synthase, found in Thermotoga maritima (strain ATCC 43589 / DSM 3109 / JCM 10099 / NBRC 100826 / MSB8).